The following is a 218-amino-acid chain: Adenylate kinase (218 aa).

10-15 provides a ligand contact to ATP; that stretch reads GAGKGT. Positions 30–59 are NMP; that stretch reads STGDMFRAAMADQTDLGVKAKAFIDKGELV. AMP-binding positions include Thr31, Arg36, 57–59, 85–88, and Gln92; these read ELV and GFPR. The LID stretch occupies residues 126–164; the sequence is GRFICKTCGATYHKLYHPTQVEGTCDRCGGHVFFQREDD. Arg127 contacts ATP. Zn(2+) contacts are provided by Cys130 and Cys133. Residue 136-137 participates in ATP binding; the sequence is TY. Zn(2+) contacts are provided by Cys150 and Cys153. 2 residues coordinate AMP: Arg161 and Arg172. Gln200 is a binding site for ATP.

It belongs to the adenylate kinase family. Monomer.

The protein resides in the cytoplasm. It carries out the reaction AMP + ATP = 2 ADP. The protein operates within purine metabolism; AMP biosynthesis via salvage pathway; AMP from ADP: step 1/1. Catalyzes the reversible transfer of the terminal phosphate group between ATP and AMP. Plays an important role in cellular energy homeostasis and in adenine nucleotide metabolism. In Latilactobacillus sakei subsp. sakei (strain 23K) (Lactobacillus sakei subsp. sakei), this protein is Adenylate kinase.